The sequence spans 582 residues: Leucine-rich repeat protein SHOC-2 (582 aa).

Composition is skewed to basic and acidic residues over residues 1–29 and 36–57; these read MSSSLGKEKDSKEKDPKVPSAKEREKEAK and KESKEKEPKTKGKDAKDGKKDS. A disordered region spans residues 1-88; sequence MSSSLGKEKD…PGTRKKSSNA (88 aa). Residues 63 to 66 carry the RVxF motif; important for interaction with PP1c motif; the sequence is GVAF. LRR repeat units follow at residues 101–122, 124–145, 147–169, 170–191, 193–214, 216–237, 239–260, 262–283, 285–307, 308–329, 332–353, 356–377, 380–400, 403–424, 426–448, 449–470, 472–494, 495–516, 518–540, and 542–563; these read NSMRLDLSKRSIHILPSSIKEL, QLTELYLYSNKLQSLPAEVGCL, NLMTLALSENSLTSLPDSLDNLK, KLRMLDLRHNKLREIPSVVYRL, SLTTLYLRFNRITTVEKDIKNL, KLSMLSIRENKIKQLPAEIGEL, NLITLDVAHNQLEHLPKEIGNC, QITNLDLQHNELLDLPDTIGNL, SLSRLGLRYNRLSAIPRSLAKCS, ALEELNLENNNISTLPESLLSS, KLNSLTLARNCFQLYPVGGPSQ, TIYSLNMEHNRINKIPFGIFSR, VLSKLNMKDNQLTSLPLDFGT, SMVELNLATNQLTKIPEDVSGL, SLEVLILSNNLLKKLPHGLGNLR, KLRELDLEENKLESLPNEIAYL, DLQKLVLTNNQLTTLPRGIGHLT, NLTHLGLGENLLTHLPEEIGTL, NLEELYLNDNPNLHSLPFELALC, and KLSIMSIENCPLSHLPPQIVAG.

Belongs to the SHOC2 family. In terms of assembly, component of the SHOC2-MRAS-PP1c (SMP) complex consisting of SHOC2, GTP-bound M-Ras/MRAS and the catalytic subunit of protein phosphatase 1 (either PPP1CA, PPP1CB or PPP1CC). SHOC2 and PP1c preferably bind M-Ras/MRAS, but they also bind K-Ras/KRAS, N-Ras/NRAS and H-Ras/HRAS; these interactions are GTP-dependent and both SHOC2 and PP1c are required to form a stable complex. Interacts with PP1c in the absence of Ras GTPases. Interacts with M-Ras/MRAS and RAF1. Interacts with ERBIN; disrupts the interaction with RAF1 and Ras, preventing the activation of the Ras signaling pathway. Interacts with LZTR1.

The protein localises to the cytoplasm. Its subcellular location is the nucleus. Core component of the SHOC2-MRAS-PP1c (SMP) holophosphatase complex that regulates activation of the MAPK pathway. Acts as a scaffolding protein in the SMP complex. The SMP complex specifically dephosphorylates the inhibitory phosphorylation at 'Ser-259' of RAF1 kinase, 'Ser-365' of BRAF kinase and 'Ser-214' of ARAF kinase, stimulating their kinase activities. The SMP complex enhances the dephosphorylation activity and substrate specificity of PP1c. The protein is Leucine-rich repeat protein SHOC-2 (SHOC2) of Homo sapiens (Human).